Consider the following 349-residue polypeptide: Hydroxymethylglutaryl-CoA synthase (349 aa).

(3S)-3-hydroxy-3-methylglutaryl-CoA contacts are provided by Asp-29 and Ala-30. The Proton donor/acceptor role is filled by Glu-81. Residues Cys-113 and Thr-154 each coordinate (3S)-3-hydroxy-3-methylglutaryl-CoA. Catalysis depends on Cys-113, which acts as the Acyl-thioester intermediate. Arg-202 is a binding site for CoA. Residues Thr-204 and His-237 each coordinate (3S)-3-hydroxy-3-methylglutaryl-CoA. Catalysis depends on His-237, which acts as the Proton donor/acceptor. Lys-242 is a CoA binding site. (3S)-3-hydroxy-3-methylglutaryl-CoA contacts are provided by Lys-246, Asn-269, and Ser-299.

It belongs to the thiolase-like superfamily. Archaeal HMG-CoA synthase family. Interacts with acetoacetyl-CoA thiolase that catalyzes the precedent step in the pathway and with a DUF35 protein. The acetoacetyl-CoA thiolase/HMG-CoA synthase complex channels the intermediate via a fused CoA-binding site, which allows for efficient coupling of the endergonic thiolase reaction with the exergonic HMGCS reaction.

The enzyme catalyses acetoacetyl-CoA + acetyl-CoA + H2O = (3S)-3-hydroxy-3-methylglutaryl-CoA + CoA + H(+). Its pathway is metabolic intermediate biosynthesis; (R)-mevalonate biosynthesis; (R)-mevalonate from acetyl-CoA: step 2/3. Its function is as follows. Catalyzes the condensation of acetyl-CoA with acetoacetyl-CoA to form 3-hydroxy-3-methylglutaryl-CoA (HMG-CoA). Functions in the mevalonate (MVA) pathway leading to isopentenyl diphosphate (IPP), a key precursor for the biosynthesis of isoprenoid compounds that are building blocks of archaeal membrane lipids. The chain is Hydroxymethylglutaryl-CoA synthase from Methanosarcina mazei (strain ATCC BAA-159 / DSM 3647 / Goe1 / Go1 / JCM 11833 / OCM 88) (Methanosarcina frisia).